The sequence spans 364 residues: Peptide chain release factor 1 (364 aa).

At glutamine 238 the chain carries N5-methylglutamine. Residues 286-297 (DEKRQAEEDSTR) are compositionally biased toward basic and acidic residues. Positions 286-315 (DEKRQAEEDSTRRNLVGSGDRSERIRTYNY) are disordered.

Belongs to the prokaryotic/mitochondrial release factor family. In terms of processing, methylated by PrmC. Methylation increases the termination efficiency of RF1.

It is found in the cytoplasm. Its function is as follows. Peptide chain release factor 1 directs the termination of translation in response to the peptide chain termination codons UAG and UAA. The protein is Peptide chain release factor 1 of Idiomarina loihiensis (strain ATCC BAA-735 / DSM 15497 / L2-TR).